A 231-amino-acid polypeptide reads, in one-letter code: NADH-ubiquinone oxidoreductase chain 4 (231 aa).

Helical transmembrane passes span P1–I21, L34–L54, I63–G85, A89–Y111, I128–P148, and L156–S176.

Belongs to the complex I subunit 4 family.

Its subcellular location is the mitochondrion membrane. The catalysed reaction is a ubiquinone + NADH + 5 H(+)(in) = a ubiquinol + NAD(+) + 4 H(+)(out). Its function is as follows. Core subunit of the mitochondrial membrane respiratory chain NADH dehydrogenase (Complex I) that is believed to belong to the minimal assembly required for catalysis. Complex I functions in the transfer of electrons from NADH to the respiratory chain. The immediate electron acceptor for the enzyme is believed to be ubiquinone. The sequence is that of NADH-ubiquinone oxidoreductase chain 4 (MT-ND4) from Crotalus concolor (Midget faded rattlesnake).